The following is a 183-amino-acid chain: Ferritin heavy chain (183 aa).

The residue at position 1 (methionine 1) is an N-acetylmethionine. Threonine 2 is modified (N-acetylthreonine; in Ferritin heavy chain, N-terminally processed). Residues 11–160 enclose the Ferritin-like diiron domain; it reads QNYHQDSEAA…DHVTNLRKMG (150 aa). Fe cation is bound by residues glutamate 28, glutamate 63, histidine 66, glutamate 108, and glutamine 142. A phosphoserine mark is found at serine 179 and serine 183.

Belongs to the ferritin family. Oligomer of 24 subunits. There are two types of subunits: L (light) chain and H (heavy) chain. The major chain can be light or heavy, depending on the species and tissue type. The functional molecule forms a roughly spherical shell with a diameter of 12 nm and contains a central cavity into which the insoluble mineral iron core is deposited. Interacts with NCOA4; NCOA4 promotes targeting of the iron-binding ferritin complex to autolysosomes following starvation or iron depletion.

It is found in the cytoplasm. Its subcellular location is the lysosome. It localises to the cytoplasmic vesicle. The protein resides in the autophagosome. The enzyme catalyses 4 Fe(2+) + O2 + 4 H(+) = 4 Fe(3+) + 2 H2O. Its function is as follows. Stores iron in a soluble, non-toxic, readily available form. Important for iron homeostasis. Has ferroxidase activity. Iron is taken up in the ferrous form and deposited as ferric hydroxides after oxidation. Also plays a role in delivery of iron to cells. Mediates iron uptake in capsule cells of the developing kidney. Delivery to lysosomes is mediated by the cargo receptor NCOA4 for autophagic degradation and release of iron. The polypeptide is Ferritin heavy chain (FTH1) (Pongo abelii (Sumatran orangutan)).